The following is a 294-amino-acid chain: Ribosomal RNA small subunit methyltransferase H (294 aa).

S-adenosyl-L-methionine-binding positions include 36 to 38, Asp-55, Phe-82, Asp-97, and Gln-104; that span reads GGH.

The protein belongs to the methyltransferase superfamily. RsmH family.

It is found in the cytoplasm. It catalyses the reaction cytidine(1402) in 16S rRNA + S-adenosyl-L-methionine = N(4)-methylcytidine(1402) in 16S rRNA + S-adenosyl-L-homocysteine + H(+). Its function is as follows. Specifically methylates the N4 position of cytidine in position 1402 (C1402) of 16S rRNA. This chain is Ribosomal RNA small subunit methyltransferase H, found in Synechococcus sp. (strain CC9605).